The following is a 162-amino-acid chain: uncharacterized protein (162 aa).

The helical transmembrane segment at 7 to 27 (LGGVMLFAIVSLMVCGCMVVF) threads the bilayer.

It localises to the membrane. This is an uncharacterized protein from Methanocaldococcus jannaschii (strain ATCC 43067 / DSM 2661 / JAL-1 / JCM 10045 / NBRC 100440) (Methanococcus jannaschii).